A 103-amino-acid polypeptide reads, in one-letter code: Conantokin-Br (103 aa).

Positions 1 to 21 (MQLYTYLYLLVPLVTFHLILG) are cleaved as a signal peptide. Residues 22–79 (TGTLDHGGALTERRSTDATALKPEPVLQKSAARSTDDNGKDRLTQMKRILKKRGKNAR) constitute a propeptide that is removed on maturation. A disordered region spans residues 34 to 64 (RRSTDATALKPEPVLQKSAARSTDDNGKDRL). Basic and acidic residues predominate over residues 55–64 (STDDNGKDRL). 4 positions are modified to 4-carboxyglutamate: glutamate 82, glutamate 83, glutamate 89, and glutamate 93. A divalent metal cation is bound by residues glutamate 89 and glutamate 93.

Belongs to the conotoxin B superfamily. The cofactor is Ca(2+). It depends on Mg(2+) as a cofactor. As to expression, expressed by the venom duct.

The protein resides in the secreted. Its function is as follows. Conantokins inhibit N-methyl-D-aspartate (NMDA) receptors. This toxin inhibits NR2 subunits N-methyl-D-aspartate (NMDA) receptor-mediated calcium influx in central nervous system neurons in the following order of preference: NR2B/GRIN2B (IC(50)=0.14 uM), NR2D/GRIN2D (IC(50)=0.31 uM), NR2A/GRIN2A (IC(50)=0.68 uM) and NR2C/GRIN2A (IC(50)=4.9 uM), when tested on rat receptors. In Conus sulcatus (Sulcate cone), this protein is Conantokin-Br.